The following is a 426-amino-acid chain: GTPase Obg (426 aa).

The Obg domain maps to 1-158; sequence MFVDEVEIKV…RSIRLELKLV (158 aa). One can recognise an OBG-type G domain in the interval 159-330; sequence ADVGLIGFPN…LIYYTGDLLK (172 aa). GTP-binding positions include 165–172, 190–194, 212–215, 282–285, and 311–313; these read GFPNVGKS, FTTLK, DIPG, NKID, and SAA. Mg(2+) is bound by residues Ser-172 and Thr-192. The OCT domain maps to 349–426; the sequence is DFADEEENIV…IGPMEFEYME (78 aa).

The protein belongs to the TRAFAC class OBG-HflX-like GTPase superfamily. OBG GTPase family. Monomer. Requires Mg(2+) as cofactor.

It localises to the cytoplasm. In terms of biological role, an essential GTPase which binds GTP, GDP and possibly (p)ppGpp with moderate affinity, with high nucleotide exchange rates and a fairly low GTP hydrolysis rate. Plays a role in control of the cell cycle, stress response, ribosome biogenesis and in those bacteria that undergo differentiation, in morphogenesis control. The sequence is that of GTPase Obg from Halothermothrix orenii (strain H 168 / OCM 544 / DSM 9562).